The sequence spans 138 residues: NADH dehydrogenase [ubiquinone] 1 alpha subcomplex subunit N7BM (138 aa).

It belongs to the complex I NDUFA12 subunit family. Complex I is composed of 42 different subunits.

The protein localises to the mitochondrion inner membrane. Accessory subunit of the mitochondrial membrane respiratory chain NADH dehydrogenase (Complex I), that is believed not to be involved in catalysis. Complex I functions in the transfer of electrons from NADH to the respiratory chain. The immediate electron acceptor for the enzyme is believed to be ubiquinone. This is NADH dehydrogenase [ubiquinone] 1 alpha subcomplex subunit N7BM from Yarrowia lipolytica (strain CLIB 122 / E 150) (Yeast).